A 288-amino-acid polypeptide reads, in one-letter code: Stress response protein YhaX (288 aa).

The protein is Stress response protein YhaX (yhaX) of Bacillus subtilis (strain 168).